An 832-amino-acid chain; its full sequence is Mechanosensitive cation channel TMEM63B (832 aa).

Over 1-40 (MLPFLLATLGTAALNSSNPKDYCYSARIRSTVLQGLPFGG) the chain is Extracellular. The helical transmembrane segment at 41-65 (VPTVLALDFMCFLALLFLFSILRKV) threads the bilayer. Residue C51 is the site of S-palmitoyl cysteine attachment. The Cytoplasmic segment spans residues 66–145 (AWDYGRLALV…KDDEIRDKCG (80 aa)). Positions 86 to 88 (RER) match the Mediates endoplasmic reticulum retention motif. A phosphoserine mark is found at S111, S113, S114, and S115. C126 carries S-palmitoyl cysteine lipidation. A helical membrane pass occupies residues 146-178 (GDAVHYLSFQRHIIGLLVVVGVLSVGIVLPVNF). At 179–202 (SGDLLENNAYSFGRTTIANLKSGN) the chain is on the extracellular side. The chain crosses the membrane as a helical span at residues 203–227 (NLLWLHTSFAFLYLLLTVYSMRRHT). Over 228 to 427 (SKMRYKEDDL…IYWEHLSIRG (200 aa)) the chain is Cytoplasmic. The interval 231 to 426 (RYKEDDLVKR…NIYWEHLSIR (196 aa)) is intracellular linker IL2; confers mechanosensitivity. 2 S-palmitoyl cysteine lipidation sites follow: C382 and C398. A helical membrane pass occupies residues 428–457 (FIWWLRCLVINVVLFILLFFLTTPAIIITT). The Extracellular portion of the chain corresponds to 458–472 (MDKFNVTKPVEYLNN). N462 carries N-linked (GlcNAc...) asparagine glycosylation. A helical transmembrane segment spans residues 473 to 502 (PIITQFFPTLLLWCFSALLPTIVYYSAFFE). Over 503 to 506 (AHWT) the chain is Cytoplasmic. The helical transmembrane segment at 507 to 543 (RSGENRTTMHKCYTFLIFMVLLLPSLGLSSLDLFFRW) threads the bilayer. The Extracellular segment spans residues 544–566 (LFDKKFLAEAAIRFECVFLPDNG). Residues 567-599 (AFFVNYVIASAFIGNAMDLLRIPGLLMYMIRLC) form a helical membrane-spanning segment. The gating helix stretch occupies residues 567–599 (AFFVNYVIASAFIGNAMDLLRIPGLLMYMIRLC). At 600-619 (LARSAAERRNVKRHQAYEFQ) the chain is on the cytoplasmic side. The helical transmembrane segment at 620-638 (FGAAYAWMMCVFTVVMTYS) threads the bilayer. At 639-641 (ITC) the chain is on the extracellular side. A helical transmembrane segment spans residues 642-666 (PIIVPFGLMYMLLKHLVDRYNLYYA). Over 667 to 673 (YLPAKLD) the chain is Cytoplasmic. The chain crosses the membrane as a helical span at residues 674-702 (KKIHSGAVNQVVAAPILCLFWLLFFSTMR). Residues 703-707 (TGFLA) are Extracellular-facing. The chain crosses the membrane as a helical span at residues 708-728 (PTSMFTFVVLVITIVICLCHV). S-palmitoyl cysteine attachment occurs at residues C726 and C729. Topologically, residues 729 to 832 (CFGHFKYLSA…DSLIENEIHQ (104 aa)) are cytoplasmic. Disordered regions lie at residues 748–767 (TDAVSSRSNGRPPTAGAVPK) and 776–818 (LQDS…DTDF). The span at 749 to 758 (DAVSSRSNGR) shows a compositional bias: polar residues. Residues 789–801 (PGSSGDEPPSSSS) show a composition bias toward low complexity.

Belongs to the CSC1 (TC 1.A.17) family. Monomer. Interacts with SLC19A2; interaction is required for the phospholipid scramblase activity. In terms of processing, palmitoylation is required for localization to the plasma membrane and stability. As to expression, expressed in cochlear hair cells (at protein level). Highly expressed in the subfornical organ of the brain. Expressed in small intestine. Brain-specific.

The protein localises to the cell membrane. It localises to the endoplasmic reticulum membrane. Its subcellular location is the lysosome membrane. The protein resides in the early endosome membrane. The enzyme catalyses Ca(2+)(in) = Ca(2+)(out). It catalyses the reaction Mg(2+)(in) = Mg(2+)(out). It carries out the reaction K(+)(in) = K(+)(out). The catalysed reaction is Na(+)(in) = Na(+)(out). The enzyme catalyses Cs(+)(in) = Cs(+)(out). It catalyses the reaction a 1,2-diacyl-sn-glycero-3-phosphocholine(in) = a 1,2-diacyl-sn-glycero-3-phosphocholine(out). It carries out the reaction a sphingomyelin(in) = a sphingomyelin(out). Mechanosensitive cation channel with low conductance and high activation threshold. Osmosensitive cation channel preferentially activated by hypotonic stress. Also acts as a phospholipid scramblase in response to changes in membrane structure: upon changes in membrane curvature and thickness, alters its conformation and translocates phospholipids, such as phosphatidylcholine and sphingomyelin, thereby controlling plasma membrane lipid distribution. Forms a heterodimer with SLC19A2, which mediates phospholipid scramblase activity following Ca(2+) stimulation. Expressed in excitatory neurons of the subfornical organ and functions as a thirst receptor that mediates neuronal response to hyperosmolality to drive thirst and drinking behavior. Facilitates intestinal motility by promoting proliferation of intestinal stem cells. Essential for the baby's first breath and respiration throughout life. Upon lung inflation conducts cation currents in alveolar type 1 and 2 cells triggering lamellar body exocytosis and surfactant secretion into airspace. Acts as an osmosensor in cochlear outer hair cells (OHCs) where it mediates calcium influx and regulatory volume decrease response. Required for the maintenance of OHC morphology, OHC survival and normal hearing. Its function is as follows. Brain-specific osmosensitive calcium channel isoform. The protein is Mechanosensitive cation channel TMEM63B of Mus musculus (Mouse).